The following is a 186-amino-acid chain: dCTP deaminase (186 aa).

DCTP is bound at residue 107–112 (KSSYAR). Glutamate 133 serves as the catalytic Proton donor/acceptor. Positions 152, 166, and 176 each coordinate dCTP.

This sequence belongs to the dCTP deaminase family. In terms of assembly, homotrimer.

It carries out the reaction dCTP + H2O + H(+) = dUTP + NH4(+). It functions in the pathway pyrimidine metabolism; dUMP biosynthesis; dUMP from dCTP (dUTP route): step 1/2. Catalyzes the deamination of dCTP to dUTP. The polypeptide is dCTP deaminase (Chloroflexus aurantiacus (strain ATCC 29366 / DSM 635 / J-10-fl)).